The sequence spans 379 residues: RNA-splicing ligase RtcB2 (379 aa).

5 residues coordinate Mn(2+): Asp74, Cys77, His137, His168, and His239. Position 136 to 140 (136 to 140 (NHFVE)) interacts with GMP. GMP-binding positions include 239–240 (HN), Ser277, 294–297 (HGAG), and Lys372. Catalysis depends on His294, which acts as the GMP-histidine intermediate.

This sequence belongs to the RtcB family. RtcB2 subfamily. The cofactor is Mn(2+).

The catalysed reaction is a 3'-end 3'-phospho-ribonucleotide-RNA + a 5'-end dephospho-ribonucleoside-RNA + GTP = a ribonucleotidyl-ribonucleotide-RNA + GMP + diphosphate. Its function is as follows. GTP-dependent RNA ligase involved in rRNA repair. Repairs damaged 16S rRNA in 30S subunits that has been cleaved between adenine-1493 and guanosine-1494 (E.coli nubering). This specific cleavage is inflicted by CdiA (ECL_04451) or by colicin E3-type (ColE3) proteins. Poorly repairs damaged rRNA in the 70S ribosome; addition of release factor PrfH improves repair about 3-fold in vitro, probably because PrfH hydrolyzes the nascent chain allowing ribosomal subunit dissociation. In vivo the PrfH-RtcB2 pair restores growth in the presence of ribotoxins that specifically create this damage. Does not repair damaged tRNA (tested with tRNA(Asp) and tRNA(Arg)). This Escherichia coli (strain ATCC 25922 / DSM 1103 / LMG 8223 / NCIMB 12210 / NCTC 12241 / WDCM 00013 / Seattle 1946) protein is RNA-splicing ligase RtcB2.